The chain runs to 191 residues: MIRITDAAQEHFLKLLAKQEEGTQIRVFVINPGTPNAECGVSYCPPDAVEASDTVLKFEKISAYVDELSAPYLEDAEIDFVTDQLGSQLTLKAPNAKMRKVDDSAPLMERVEYVLQSQINPQLAGHGGRVTLMEITDDGMAILQFGGGCNGCSMVDYTLKEGIEKELLEKFPELKGVRDLTEHQRGEHSYY.

2 residues coordinate [4Fe-4S] cluster: Cys-149 and Cys-152.

This sequence belongs to the NfuA family. Homodimer. Requires [4Fe-4S] cluster as cofactor.

Involved in iron-sulfur cluster biogenesis. Binds a 4Fe-4S cluster, can transfer this cluster to apoproteins, and thereby intervenes in the maturation of Fe/S proteins. Could also act as a scaffold/chaperone for damaged Fe/S proteins. The protein is Fe/S biogenesis protein NfuA of Pectobacterium carotovorum subsp. carotovorum (strain PC1).